The primary structure comprises 456 residues: tRNA (guanine(37)-N(1))-methyltransferase (456 aa).

Residues His246, 284–285 (DL), 310–311 (DG), and Asn336 contribute to the S-adenosyl-L-methionine site.

It belongs to the class I-like SAM-binding methyltransferase superfamily. TRM5/TYW2 family. As to quaternary structure, monomer.

Its subcellular location is the mitochondrion matrix. It is found in the nucleus. It localises to the cytoplasm. It catalyses the reaction guanosine(37) in tRNA + S-adenosyl-L-methionine = N(1)-methylguanosine(37) in tRNA + S-adenosyl-L-homocysteine + H(+). Functionally, specifically methylates the N1 position of guanosine-37 in various cytoplasmic and mitochondrial tRNAs. Methylation is not dependent on the nature of the nucleoside 5' of the target nucleoside. This is the first step in the biosynthesis of wybutosine (yW), a modified base adjacent to the anticodon of tRNAs and required for accurate decoding. This is tRNA (guanine(37)-N(1))-methyltransferase from Ciona intestinalis (Transparent sea squirt).